A 230-amino-acid polypeptide reads, in one-letter code: Response regulator MprA (230 aa).

The Response regulatory domain occupies Arg4–Leu118. Residue Asp48 is modified to 4-aspartylphosphate. The ompR/PhoB-type DNA-binding region spans Ser129 to Glu227.

In terms of assembly, monomer. Interaction with each conserved 8-bp repeat requires tandem binding by two protein monomers. Phosphorylated and dephosphorylated by MprB.

It localises to the cytoplasm. In terms of biological role, member of the two-component regulatory system MprB/MprA which contributes to maintaining a balance among several systems involved in stress resistance and is required for establishment and maintenance of persistent infection in the host. Functions as a transcriptional regulator that recognizes a 19-bp nucleotide motif comprizing two loosely conserved 8-bp direct DNA-binding motif repeats separated by a 3-bp spacer region. MprB/MprA up-regulates expression of mprA and pepD. In Mycobacterium bovis (strain ATCC BAA-935 / AF2122/97), this protein is Response regulator MprA (mprA).